The primary structure comprises 366 residues: Subtilisin-like protease het-Q2 (366 aa).

The region spanning 1 to 321 (MSAISHHSLS…RVLMALGEKT (321 aa)) is the Peptidase S8 domain. Aspartate 35 (charge relay system) is an active-site residue. The disordered stretch occupies residues 79–98 (DFCQPSPPGDRQGPPPQPHS). Positions 83 to 96 (PSPPGDRQGPPPQP) are enriched in pro residues. Catalysis depends on charge relay system residues histidine 105 and serine 266. Residues 261–283 (LVSGSSFATPVVVSVAALVLAFV) form a helical membrane-spanning segment.

This sequence belongs to the peptidase S8 family.

Its subcellular location is the membrane. Serine protease involved in heterokaryon incompatibility, a process that ensures that during spontaneous vegetative cell fusion, only compatible cells from the same colony survive (non-self-recognition). In P.anserina, the het-q locus exists as 2 incompatible alleles, het-Q1 (AC B2AXJ5) and het-Q2 (this entry). Prevents cell fusion with strains containing the gasdermin-like protein het-Q1 by mediating proteolytic cleavage and maturation of het-Q1 during the allorecognition process, thereby triggering cell death. The chain is Subtilisin-like protease het-Q2 from Podospora anserina (Pleurage anserina).